The primary structure comprises 395 residues: Vibriobactin-specific isochorismate synthase (395 aa).

This sequence belongs to the isochorismate synthase family.

It carries out the reaction chorismate = isochorismate. It functions in the pathway siderophore biosynthesis; vibriobactin biosynthesis. The sequence is that of Vibriobactin-specific isochorismate synthase (vibC) from Vibrio cholerae serotype O1 (strain ATCC 39315 / El Tor Inaba N16961).